We begin with the raw amino-acid sequence, 180 residues long: E1B protein, small T-antigen (180 aa).

The tract at residues 142–180 (GPAAPLARQGSQQEEQQQRQEEEQVQEEMRSGLDPPTEN) is disordered. Basic and acidic residues predominate over residues 157–172 (QQQRQEEEQVQEEMRS).

Belongs to the adenoviridae E1B 19 kDa protein family.

The protein is E1B protein, small T-antigen of Simian adenovirus serotype 7 (SAdV-7).